The chain runs to 530 residues: Neutral amino acid transporter A (530 aa).

An N-acetylmethionine modification is found at Met1. Polar residues predominate over residues 1–10; sequence MEKSSETNGY. The disordered stretch occupies residues 1 to 28; the sequence is MEKSSETNGYLDSAQEGPAAGPGEPGTT. Over 1–41 the chain is Cytoplasmic; that stretch reads MEKSSETNGYLDSAQEGPAAGPGEPGTTARRAGRCAGFLRR. A compositionally biased stretch (low complexity) spans 16–28; sequence EGPAAGPGEPGTT. Transmembrane regions (helical) follow at residues 42–62, 88–108, and 119–139; these read HGLVLLTVSGVVAGAGLGAAL, MIILPLVVCSLVSGAASLDAS, and AYFGLTTLGASALAVALAFII. Over 140–216 the chain is Extracellular; the sequence is KPGSGSQTLQ…VTIEKIPIGT (77 aa). N-linked (GlcNAc...) asparagine glycosylation occurs at Asn201. 6 helical membrane-spanning segments follow: residues 217–237, 257–277, 298–318, 328–348, 373–393, and 418–438; these read EIEGMNILGLVLFALVLGVAL, ATMVLVSWIMWYVPVGIMFLV, IFTSILGHFIHGGIVLPLIYF, FLLGLLTPFATAFATCSSSAT, IGATVNMDGAAIFQCVAAVFI, and VGAAGVPAGGVLTIAIILEAI. The segment at 488-530 is disordered; that stretch reads ELSEVKVEAIPNSKSEEETSPLVTHPNPTGPAASTPESKESVL. Phosphoserine occurs at positions 507, 525, and 528.

Belongs to the dicarboxylate/amino acid:cation symporter (DAACS) (TC 2.A.23) family. SLC1A4 subfamily.

The protein resides in the membrane. The protein localises to the melanosome. It catalyses the reaction L-threonine(in) + Na(+)(in) = L-threonine(out) + Na(+)(out). It carries out the reaction L-serine(in) + Na(+)(in) = L-serine(out) + Na(+)(out). The catalysed reaction is L-cysteine(in) + Na(+)(in) = L-cysteine(out) + Na(+)(out). The enzyme catalyses L-alanine(in) + Na(+)(in) = L-alanine(out) + Na(+)(out). It catalyses the reaction L-proline(in) + Na(+)(in) = L-proline(out) + Na(+)(out). It carries out the reaction 4-hydroxy-L-proline(in) + Na(+)(in) = 4-hydroxy-L-proline(out) + Na(+)(out). Its function is as follows. Sodium-dependent neutral amino-acid transporter that mediates transport of alanine, serine, cysteine, proline, hydroxyproline and threonine. This chain is Neutral amino acid transporter A (SLC1A4), found in Bos taurus (Bovine).